A 492-amino-acid chain; its full sequence is NADH-quinone oxidoreductase subunit N (492 aa).

14 consecutive transmembrane segments (helical) span residues methionine 13–phenylalanine 33, proline 42–isoleucine 62, phenylalanine 79–phenylalanine 99, glycine 111–glycine 131, leucine 133–isoleucine 153, valine 168–leucine 188, tyrosine 211–valine 231, phenylalanine 251–isoleucine 271, serine 284–glycine 304, phenylalanine 318–methionine 340, isoleucine 344–serine 366, alanine 388–isoleucine 408, valine 426–phenylalanine 446, and proline 463–valine 483.

It belongs to the complex I subunit 2 family. As to quaternary structure, NDH-1 is composed of 14 different subunits. Subunits NuoA, H, J, K, L, M, N constitute the membrane sector of the complex.

It localises to the cell membrane. It carries out the reaction a quinone + NADH + 5 H(+)(in) = a quinol + NAD(+) + 4 H(+)(out). In terms of biological role, NDH-1 shuttles electrons from NADH, via FMN and iron-sulfur (Fe-S) centers, to quinones in the respiratory chain. The immediate electron acceptor for the enzyme in this species is believed to be a menaquinone. Couples the redox reaction to proton translocation (for every two electrons transferred, four hydrogen ions are translocated across the cytoplasmic membrane), and thus conserves the redox energy in a proton gradient. In Geobacillus sp. (strain WCH70), this protein is NADH-quinone oxidoreductase subunit N.